We begin with the raw amino-acid sequence, 477 residues long: Peptidyl-prolyl cis-trans isomerase FKBP53 (477 aa).

Disordered stretches follow at residues 104–135 (DYEH…EDEQ) and 153–366 (AAAP…QVRT). A compositionally biased stretch (basic residues) spans 264 to 274 (KSKKKKNQKEK). Residues 299 to 321 (ISQISSNTKAQDGTANNAMSESS) are compositionally biased toward polar residues. Basic and acidic residues predominate over residues 322–331 (KTPDKSAEKK). A compositionally biased stretch (polar residues) spans 351–366 (VEKQTPADSKSSQVRT). The PPIase FKBP-type domain maps to 389-477 (GKTVSVRYIG…TFDVELINVQ (89 aa)).

This sequence belongs to the FKBP-type PPIase family. In terms of assembly, interacts with histone H3. As to expression, broadly expressed in leaves, flowers, stems and roots. Detected in root apical meristem region and pollen.

It localises to the nucleus. It catalyses the reaction [protein]-peptidylproline (omega=180) = [protein]-peptidylproline (omega=0). In terms of biological role, PPIases accelerate the folding of proteins. It catalyzes the cis-trans isomerization of proline imidic peptide bonds in oligopeptides. Histone chaperone possibly involved in H3/H4 deposition to the nucleosome. Associates with 18S rDNA chromatin and negatively regulates the level of its expression. The polypeptide is Peptidyl-prolyl cis-trans isomerase FKBP53 (FKBP53) (Arabidopsis thaliana (Mouse-ear cress)).